The following is an 860-amino-acid chain: Ras GTPase-activating-like protein gapA (860 aa).

Positions 1–20 (MEGLEIEDEDVILLDEDDDS) are enriched in acidic residues. Residues 1–48 (MEGLEIEDEDVILLDEDDDSSSSSTVNNSSSNIKNNGNTNNNIGNDDS) form a disordered region. Over residues 21 to 46 (SSSSTVNNSSSNIKNNGNTNNNIGND) the composition is skewed to low complexity. Residues 146–185 (AEIQELKRNMVAEIRRNHLLERDVNKLDKRIALLIKHRSN) are a coiled coil. The Ras-GAP domain maps to 269 to 515 (FLILSLFRLA…SIVRQYLEDL (247 aa)). Residues 663-732 (NNPQLSSNAE…TIALRDLRKH (70 aa)) are a coiled coil.

As to quaternary structure, heterotetramer. Quaternary complex with activated rac1A, ctxA and ctxB in the absence of rgaA.

In terms of biological role, part of signaling pathway that is required for completion of cytokinesis. gapA and rgaA control cortexillin localization to the cleavage furrow and hence may be involved in cleavage of the midbody in the final stage of cytokinesis by regulating the actin cytoskeleton. Forms a complex by linking activated rac1A to ctxA in the absence of rgaA. Assembly of this complex is necessary for the recruitment of cortexillin to the midzone of the dividing cell. This Dictyostelium discoideum (Social amoeba) protein is Ras GTPase-activating-like protein gapA (gapA).